The primary structure comprises 257 residues: Probable enoyl-CoA hydratase echA17 (257 aa).

It belongs to the enoyl-CoA hydratase/isomerase family.

The catalysed reaction is a (3S)-3-hydroxyacyl-CoA = a (2E)-enoyl-CoA + H2O. It catalyses the reaction a 4-saturated-(3S)-3-hydroxyacyl-CoA = a (3E)-enoyl-CoA + H2O. In terms of biological role, could possibly oxidize fatty acids using specific components. The sequence is that of Probable enoyl-CoA hydratase echA17 (echA17) from Mycobacterium avium (strain 104).